Here is a 33-residue protein sequence, read N- to C-terminus: Cytochrome b6-f complex subunit 7 (33 aa).

The chain crosses the membrane as a helical span at residues 9 to 29; that stretch reads AVICFTLTLIGLSLGFVLLKI.

This sequence belongs to the PetM family. In terms of assembly, the 4 large subunits of the cytochrome b6-f complex are cytochrome b6, subunit IV (17 kDa polypeptide, PetD), cytochrome f and the Rieske protein, while the 4 small subunits are PetG, PetL, PetM and PetN. The complex functions as a dimer.

It localises to the plastid. It is found in the cyanelle thylakoid membrane. Its function is as follows. Component of the cytochrome b6-f complex, which mediates electron transfer between photosystem II (PSII) and photosystem I (PSI), cyclic electron flow around PSI, and state transitions. This chain is Cytochrome b6-f complex subunit 7, found in Cyanophora paradoxa.